A 39-amino-acid polypeptide reads, in one-letter code: Mu-theraphotoxin-Ae1a (39 aa).

Intrachain disulfides connect Cys-7/Cys-21, Cys-14/Cys-26, and Cys-20/Cys-33. Phe-39 carries the phenylalanine amide modification.

Belongs to the neurotoxin 10 (Hwtx-1) family. 47 subfamily. As to expression, expressed by the venom gland.

It localises to the secreted. Its function is as follows. Insecticidal toxin that acts, at least partially, by inhibiting insect voltage-gated sodium (NaV) channels of several insect species. The toxin binds to the voltage sensor in NaV channel domain II and inhibits channel opening by shifting the threshold for channel activation to more positive voltages. The toxin binding is sensitive to residues in the S1-S2 loop of the domain II voltage sensor. In vivo, the recombinant toxin causes paralysis and/or death to two dipteran species (Lucilia cuprina and Drosophila melanogaster). In contrast, the toxin does not show paralytic or lethal effect on the cotton bollworm Helicoverpa armigera and the triatomine bug Rhodinius prolixus. The chain is Mu-theraphotoxin-Ae1a from Augacephalus ezendami (Mozambique baboon spider).